The primary structure comprises 247 residues: Protein eak-4 (247 aa).

Residue Gly-2 is the site of N-myristoyl glycine attachment.

Expressed in the 2 embryonic head hypodermal cells XXXL/R.

The protein localises to the cell membrane. Together with eak-6 and sdf-9, negatively regulates dauer larva formation downstream of the insulin-like receptor daf-2 and in parallel with age-1, pdk-1 and akt-1. In Caenorhabditis elegans, this protein is Protein eak-4.